Here is a 151-residue protein sequence, read N- to C-terminus: ATP synthase subunit b' (151 aa).

Residues 18–38 (TLPLMALQVVLLTFILNALFF) form a helical membrane-spanning segment.

Belongs to the ATPase B chain family. As to quaternary structure, F-type ATPases have 2 components, F(1) - the catalytic core - and F(0) - the membrane proton channel. F(1) has five subunits: alpha(3), beta(3), gamma(1), delta(1), epsilon(1). F(0) has four main subunits: a(1), b(1), b'(1) and c(10-14). The alpha and beta chains form an alternating ring which encloses part of the gamma chain. F(1) is attached to F(0) by a central stalk formed by the gamma and epsilon chains, while a peripheral stalk is formed by the delta, b and b' chains.

The protein localises to the cellular thylakoid membrane. Functionally, f(1)F(0) ATP synthase produces ATP from ADP in the presence of a proton or sodium gradient. F-type ATPases consist of two structural domains, F(1) containing the extramembraneous catalytic core and F(0) containing the membrane proton channel, linked together by a central stalk and a peripheral stalk. During catalysis, ATP synthesis in the catalytic domain of F(1) is coupled via a rotary mechanism of the central stalk subunits to proton translocation. Component of the F(0) channel, it forms part of the peripheral stalk, linking F(1) to F(0). The b'-subunit is a diverged and duplicated form of b found in plants and photosynthetic bacteria. In Prochlorococcus marinus (strain MIT 9313), this protein is ATP synthase subunit b'.